The following is a 572-amino-acid chain: SHUGOSHIN 1 (572 aa).

Residues 59–110 (KHQQQAILISSKENAENLQKENTKLMKVVMERDGIKSDLKKLRIEFQKVQEQ) adopt a coiled-coil conformation. 4 disordered regions span residues 185–221 (DADH…PANS), 244–285 (KLVS…QTET), 333–352 (ARLK…SIET), and 484–572 (SRRQ…RGGF). The segment covering 192–201 (SGSSNANSLQ) has biased composition (polar residues). 4 stretches are compositionally biased toward basic and acidic residues: residues 244–257 (KLVS…ENHI), 336–352 (KSQE…SIET), 523–542 (ELKR…EMRK), and 552–572 (AAEK…RGGF).

This sequence belongs to the shugoshin family.

Protects sister chromatid centromere cohesion in meiosis I but not through the protection of the cohesin SYN1. Required with SGO2 for full protection of centromeric cohesion during anaphase I. Required to prevent precocious release of pericentromeric cohesins during meiosis. Not necessary for the maintenance of the synaptonemal complex (SC). Not required for monopolar spindle orientation in meiosis I. This Arabidopsis thaliana (Mouse-ear cress) protein is SHUGOSHIN 1.